A 113-amino-acid chain; its full sequence is Urocortin-2 (113 aa).

Residues 1-23 form the signal peptide; the sequence is MMTRWALVVFVVLMLDRILFVPG. A propeptide spanning residues 24–71 is cleaved from the precursor; that stretch reads TPIPTFQLLPQNSLETTPSSVTSESSSGTTTGPSASWSNSKASPYLDT. Residues 37-61 show a composition bias toward low complexity; it reads LETTPSSVTSESSSGTTTGPSASWS. A disordered region spans residues 37 to 64; sequence LETTPSSVTSESSSGTTTGPSASWSNSK. At Val110 the chain carries Valine amide; partial.

Belongs to the sauvagine/corticotropin-releasing factor/urotensin I family. In terms of assembly, binds with high affinity to CRF receptors 2-alpha and 2-beta. Post-translationally, glycosylated.

The protein resides in the secreted. Its function is as follows. Suppresses food intake, delays gastric emptying and decreases heat-induced edema. Might represent an endogenous ligand for maintaining homeostasis after stress. In Mus musculus (Mouse), this protein is Urocortin-2 (Ucn2).